The following is a 202-amino-acid chain: MTAESTRKASIERSTKETSIAVSVDLDGVGKFDITTGVGFFDHMLEQLSRHSLIDMRVMAKGDLHIDDHHTVEDTGITLGQAVAKALGERRGIVRYASLDLAMDDTLTGAAVDVSGRAFLVWNVNFTTAKIGTFDTELVREFFQAFAMNAGITLHINNHYGANNHHIAESTFKAVARVLRAALETDPRQKDAIPSTKGSLKG.

This sequence belongs to the imidazoleglycerol-phosphate dehydratase family.

Its subcellular location is the cytoplasm. The catalysed reaction is D-erythro-1-(imidazol-4-yl)glycerol 3-phosphate = 3-(imidazol-4-yl)-2-oxopropyl phosphate + H2O. It functions in the pathway amino-acid biosynthesis; L-histidine biosynthesis; L-histidine from 5-phospho-alpha-D-ribose 1-diphosphate: step 6/9. The protein is Imidazoleglycerol-phosphate dehydratase of Brucella suis (strain ATCC 23445 / NCTC 10510).